The sequence spans 444 residues: NADH-dependent flavin oxidoreductase nadA (444 aa).

Residues 37–40 and Gln123 contribute to the FMN site; that span reads ERMC. Positions 127–149 are disordered; sequence PGRQTPSHRQPEPISASDVPLDT. Residue 192–195 coordinates substrate; it reads HAAH. 345–346 serves as a coordination point for FMN; sequence AR.

This sequence belongs to the NADH:flavin oxidoreductase/NADH oxidase family.

It is found in the cytoplasm. The protein resides in the cytosol. Its function is as follows. NADH-dependent flavin oxidoreductase; part of the gene cluster that mediates the biosynthesis of aflatoxins, a group of polyketide-derived furanocoumarins, and part of the most toxic and carcinogenic compounds among the known mycotoxins. The four major aflatoxins produced by A.parasiticus are aflatoxin B1 (AFB1), aflatoxin B2 (AFB2), aflatoxin G1 (AFG1) and aflatoxin G2 (AFG2). Within the aflatoxin pathway, the NADH-dependent flavin oxidoreductase nadA is specifically required for the last steps in which OMST is converted specifically to aflatoxin G1. The biosynthesis of aflatoxins begins with the norsolorinic acid synthase aflC that combines a hexanoyl starter unit produced by the fatty acid synthase aflA/aflB and 7 malonyl-CoA extender units to synthesize the precursor NOR. The second step is the conversion of NOR to averantin and requires the norsolorinic acid ketoreductase aflD, which catalyzes the dehydration of norsolorinic acid to form (1'S)-averantin. The norsolorinic acid reductases aflE and aflF may also play a role in the conversion of NOR to AVN. The cytochrome P450 monooxygenase aflG then catalyzes the hydroxylation of AVN to 5'hydroxyaverantin (HAVN). The next step is performed by the 5'-hydroxyaverantin dehydrogenase aflH that transforms HAVN to 5'-oxoaverantin (OAVN) which is further converted to averufin (AVF) by aflK that plays a dual role in the pathway, as a 5'-oxoaverantin cyclase that mediates conversion of 5'-oxoaverantin, as well as a versicolorin B synthase in a later step in the pathway. The averufin oxidase aflI catalyzes the conversion of AVF to versiconal hemiacetal acetate (VHA). VHA is then the substrate for the versiconal hemiacetal acetate esterase aflJ to yield versiconal (VAL). Versicolorin B synthase aflK then converts VAL to versicolorin B (VERB) by closing the bisfuran ring of aflatoxin which is required for DNA-binding, thus giving to aflatoxin its activity as a mutagen. Then, the activity of the versicolorin B desaturase aflL leads to versicolorin A (VERA). A branch point starts from VERB since it can also be converted to dihydrodemethylsterigmatocystin (DMDHST), probably also by aflL, VERA being a precursor for aflatoxins B1 and G1, and DMDHST for aflatoxins B2 and G2. Next, the versicolorin reductase aflM and the cytochrome P450 monooxygenase aflN are involved in conversion of VERA to demethylsterigmatocystin (DMST). AflX and aflY seem also involved in this step, through probable aflX-mediated epoxide ring-opening step following versicolorin A oxidation and aflY-mediated Baeyer-Villiger oxidation required for the formation of the xanthone ring. The methyltransferase aflO then leads to the modification of DMST to sterigmatocystin (ST), and of DMDHST to dihydrosterigmatocystin (DHST). Both ST and DHST are then substrates of the O-methyltransferase aflP to yield O-methylsterigmatocystin (OMST) and dihydro-O-methylsterigmatocystin (DHOMST), respectively. Finally OMST is converted to aflatoxins B1 and G1, and DHOMST to aflatoxins B2 and G2, via the action of several enzymes including O-methylsterigmatocystin oxidoreductase aflQ, the cytochrome P450 monooxygenase aflU, but also the NADH-dependent flavin oxidoreductase nadA which is specifically required for the synthesis of AFG1. This is NADH-dependent flavin oxidoreductase nadA from Aspergillus parasiticus (strain ATCC 56775 / NRRL 5862 / SRRC 143 / SU-1).